Reading from the N-terminus, the 257-residue chain is Flavodoxin/ferredoxin--NADP reductase (257 aa).

The FAD-binding FR-type domain maps to 2 to 110 (NPWINANVLK…EKSFGFFTLD (109 aa)). FAD-binding positions include 59–62 (RAYS), tyrosine 75, 83–85 (KLS), and threonine 125. NADP(+)-binding positions include 152-153 (VR), 182-183 (SR), arginine 193, 223-225 (NPA), and aspartate 229. 256 to 257 (YW) contributes to the FAD binding site.

It belongs to the ferredoxin--NADP reductase type 1 family. It depends on FAD as a cofactor.

It is found in the cytoplasm. It catalyses the reaction 2 reduced [2Fe-2S]-[ferredoxin] + NADP(+) + H(+) = 2 oxidized [2Fe-2S]-[ferredoxin] + NADPH. The enzyme catalyses reduced [flavodoxin] + NADP(+) = oxidized [flavodoxin] + NADPH + 2 H(+). Functionally, transports electrons between flavodoxin or ferredoxin and NADPH. This is Flavodoxin/ferredoxin--NADP reductase (fpr) from Buchnera aphidicola subsp. Schizaphis graminum (strain Sg).